The chain runs to 198 residues: uncharacterized protein (198 aa).

A C4-type zinc finger spans residues 9-43; that stretch reads CPVCGGKGTFVITSHQIDIPYFGPVLETTMICEKC.

This sequence belongs to the ZPR1 family.

This is an uncharacterized protein from Methanocaldococcus jannaschii (strain ATCC 43067 / DSM 2661 / JAL-1 / JCM 10045 / NBRC 100440) (Methanococcus jannaschii).